The primary structure comprises 215 residues: ATP phosphoribosyltransferase (215 aa).

Belongs to the ATP phosphoribosyltransferase family. Short subfamily. Heteromultimer composed of HisG and HisZ subunits.

The protein localises to the cytoplasm. It catalyses the reaction 1-(5-phospho-beta-D-ribosyl)-ATP + diphosphate = 5-phospho-alpha-D-ribose 1-diphosphate + ATP. It functions in the pathway amino-acid biosynthesis; L-histidine biosynthesis; L-histidine from 5-phospho-alpha-D-ribose 1-diphosphate: step 1/9. Functionally, catalyzes the condensation of ATP and 5-phosphoribose 1-diphosphate to form N'-(5'-phosphoribosyl)-ATP (PR-ATP). Has a crucial role in the pathway because the rate of histidine biosynthesis seems to be controlled primarily by regulation of HisG enzymatic activity. The polypeptide is ATP phosphoribosyltransferase (Prochlorococcus marinus (strain MIT 9215)).